The chain runs to 155 residues: Small ribosomal subunit protein uS7 (155 aa).

This sequence belongs to the universal ribosomal protein uS7 family. In terms of assembly, part of the 30S ribosomal subunit. Contacts proteins S9 and S11.

Functionally, one of the primary rRNA binding proteins, it binds directly to 16S rRNA where it nucleates assembly of the head domain of the 30S subunit. Is located at the subunit interface close to the decoding center, probably blocks exit of the E-site tRNA. The chain is Small ribosomal subunit protein uS7 from Mycoplasma capricolum subsp. capricolum (strain California kid / ATCC 27343 / NCTC 10154).